The chain runs to 291 residues: ATP synthase gamma chain (291 aa).

It belongs to the ATPase gamma chain family. F-type ATPases have 2 components, CF(1) - the catalytic core - and CF(0) - the membrane proton channel. CF(1) has five subunits: alpha(3), beta(3), gamma(1), delta(1), epsilon(1). CF(0) has three main subunits: a, b and c.

Its subcellular location is the cell inner membrane. Its function is as follows. Produces ATP from ADP in the presence of a proton gradient across the membrane. The gamma chain is believed to be important in regulating ATPase activity and the flow of protons through the CF(0) complex. The sequence is that of ATP synthase gamma chain from Variovorax paradoxus (strain S110).